A 276-amino-acid polypeptide reads, in one-letter code: Large ribosomal subunit protein uL2 (276 aa).

The tract at residues 219–276 (TVRGSVMNPNDHPHGGGEGRAPIGRKSPMSPWGKPTLGYKTRQRNKPSDKYIVRKRKK) is disordered.

The protein belongs to the universal ribosomal protein uL2 family. Part of the 50S ribosomal subunit. Forms a bridge to the 30S subunit in the 70S ribosome.

Its function is as follows. One of the primary rRNA binding proteins. Required for association of the 30S and 50S subunits to form the 70S ribosome, for tRNA binding and peptide bond formation. It has been suggested to have peptidyltransferase activity; this is somewhat controversial. Makes several contacts with the 16S rRNA in the 70S ribosome. This chain is Large ribosomal subunit protein uL2, found in Oceanobacillus iheyensis (strain DSM 14371 / CIP 107618 / JCM 11309 / KCTC 3954 / HTE831).